The primary structure comprises 49 residues: uncharacterized protein (49 aa).

This is an uncharacterized protein from Archaeoglobus fulgidus (strain ATCC 49558 / DSM 4304 / JCM 9628 / NBRC 100126 / VC-16).